The sequence spans 179 residues: NADH-quinone oxidoreductase subunit B 1 (179 aa).

[4Fe-4S] cluster contacts are provided by cysteine 38, cysteine 39, cysteine 104, and cysteine 133.

It belongs to the complex I 20 kDa subunit family. In terms of assembly, NDH-1 is composed of 14 different subunits. Subunits NuoB, C, D, E, F, and G constitute the peripheral sector of the complex. [4Fe-4S] cluster serves as cofactor.

It is found in the cell membrane. It catalyses the reaction a quinone + NADH + 5 H(+)(in) = a quinol + NAD(+) + 4 H(+)(out). Its function is as follows. NDH-1 shuttles electrons from NADH, via FMN and iron-sulfur (Fe-S) centers, to quinones in the respiratory chain. The immediate electron acceptor for the enzyme in this species is believed to be ubiquinone. Couples the redox reaction to proton translocation (for every two electrons transferred, four hydrogen ions are translocated across the cytoplasmic membrane), and thus conserves the redox energy in a proton gradient. In Herpetosiphon aurantiacus (strain ATCC 23779 / DSM 785 / 114-95), this protein is NADH-quinone oxidoreductase subunit B 1.